A 218-amino-acid chain; its full sequence is uncharacterized protein (218 aa).

5 helical membrane passes run 19 to 39 (VFGF…FTII), 92 to 112 (FDYA…VSAV), 124 to 144 (YGLI…MILA), 161 to 181 (LLFE…IAPF), and 196 to 216 (YILM…EILL).

The protein resides in the cell membrane. This is an uncharacterized protein from Methanocaldococcus jannaschii (strain ATCC 43067 / DSM 2661 / JAL-1 / JCM 10045 / NBRC 100440) (Methanococcus jannaschii).